Consider the following 149-residue polypeptide: Endonuclease I (149 aa).

In terms of assembly, homodimer.

It catalyses the reaction Endonucleolytic cleavage to 5'-phosphooligonucleotide end-products.. Junction-resolving enzyme that selectively binds and cleaves four-way (Holliday) DNA junctions present after viral genomic replication. These intermediates are created during DNA repair, processing of stalled replication forks and homologous genetic recombination. Introduces two nicks on the two non-crossing strands, at 5' sides of the junction. Also participates together with gp6 in the degradation of host chromosome to provide nucleotides for phage DNA synthesis. The polypeptide is Endonuclease I (Escherichia coli (Bacteriophage T7)).